We begin with the raw amino-acid sequence, 336 residues long: UDP-N-acetylmuramoylpentapeptide-lysine N(6)-alanyltransferase (336 aa).

Residues 37-40 (KNNW), Y104, R212, Y216, and Y257 each bind substrate.

Belongs to the FemABX family.

It catalyses the reaction UDP-N-acetyl-alpha-D-muramoyl-L-alanyl-gamma-D-glutamyl-L-lysyl-D-alanyl-D-alanine + L-alanyl-tRNA(Ala) = UDP-N-acetyl-alpha-D-muramoyl-L-alanyl-gamma-D-glutamyl-N(6)-(L-alanyl)-L-lysyl-D-alanyl-D-alanine + tRNA(Ala) + H(+). Involved in the synthesis of the bacterial cell wall. Catalyzes the addition of alanine into the interchain peptide bridge of peptidoglycan precursor using aminoacyl-tRNA(Ala) as amino acid donor. This alanine is added to the epsilon-amino group of the L-lysine of the peptidoglycan UDP-N-acetyl-alpha-D-muramoyl-L-alanyl-D-glutamyl-L-lysyl-D-alanyl-D-alanine, in a ribosome-independent mechanism. Specific for UDP-N-acetyl-muramoyl-pentapeptide. Has no activity toward UDP-N-acetyl-muramoyl-tetrapeptide or UDP-N-acetyl-muramoyl-tripeptide. Also acts on L-seryl-tRNA(Ser). This is UDP-N-acetylmuramoylpentapeptide-lysine N(6)-alanyltransferase from Weissella viridescens (Lactobacillus viridescens).